The chain runs to 314 residues: tRNA-cytidine(32) 2-sulfurtransferase (314 aa).

A PP-loop motif motif is present at residues 49-54 (SGGKDS). 3 residues coordinate [4Fe-4S] cluster: Cys124, Cys127, and Cys215.

The protein belongs to the TtcA family. As to quaternary structure, homodimer. The cofactor is Mg(2+). It depends on [4Fe-4S] cluster as a cofactor.

Its subcellular location is the cytoplasm. The enzyme catalyses cytidine(32) in tRNA + S-sulfanyl-L-cysteinyl-[cysteine desulfurase] + AH2 + ATP = 2-thiocytidine(32) in tRNA + L-cysteinyl-[cysteine desulfurase] + A + AMP + diphosphate + H(+). It participates in tRNA modification. Catalyzes the ATP-dependent 2-thiolation of cytidine in position 32 of tRNA, to form 2-thiocytidine (s(2)C32). The sulfur atoms are provided by the cysteine/cysteine desulfurase (IscS) system. This is tRNA-cytidine(32) 2-sulfurtransferase from Pasteurella multocida (strain Pm70).